Reading from the N-terminus, the 333-residue chain is 4-hydroxyproline 2-epimerase (333 aa).

Cys-90 (proton acceptor) is an active-site residue. Substrate is bound by residues 91–92 (GH), His-223, and Asp-249. Catalysis depends on Cys-253, which acts as the Proton donor. 254-255 (GT) is a binding site for substrate.

This sequence belongs to the proline racemase family.

The enzyme catalyses trans-4-hydroxy-L-proline = cis-4-hydroxy-D-proline. Catalyzes the epimerization of trans-4-hydroxy-L-proline (t4LHyp) to cis-4-hydroxy-D-proline (c4DHyp). Is likely involved in a degradation pathway that converts t4LHyp to alpha-ketoglutarate. Displays no proline racemase activity. This chain is 4-hydroxyproline 2-epimerase, found in Shewanella loihica (strain ATCC BAA-1088 / PV-4).